A 304-amino-acid chain; its full sequence is Aspartate carbamoyltransferase catalytic subunit (304 aa).

2 residues coordinate carbamoyl phosphate: Arg-55 and Thr-56. L-aspartate is bound at residue Lys-83. Arg-105, His-133, and Gln-136 together coordinate carbamoyl phosphate. The L-aspartate site is built by Arg-166 and Arg-220. Gly-261 and Pro-262 together coordinate carbamoyl phosphate.

This sequence belongs to the aspartate/ornithine carbamoyltransferase superfamily. ATCase family. In terms of assembly, heterododecamer (2C3:3R2) of six catalytic PyrB chains organized as two trimers (C3), and six regulatory PyrI chains organized as three dimers (R2).

The enzyme catalyses carbamoyl phosphate + L-aspartate = N-carbamoyl-L-aspartate + phosphate + H(+). It functions in the pathway pyrimidine metabolism; UMP biosynthesis via de novo pathway; (S)-dihydroorotate from bicarbonate: step 2/3. Functionally, catalyzes the condensation of carbamoyl phosphate and aspartate to form carbamoyl aspartate and inorganic phosphate, the committed step in the de novo pyrimidine nucleotide biosynthesis pathway. The chain is Aspartate carbamoyltransferase catalytic subunit from Caldanaerobacter subterraneus subsp. tengcongensis (strain DSM 15242 / JCM 11007 / NBRC 100824 / MB4) (Thermoanaerobacter tengcongensis).